A 61-amino-acid polypeptide reads, in one-letter code: Small ribosomal subunit protein uS14B (61 aa).

Zn(2+) contacts are provided by C24, C27, C40, and C43.

It belongs to the universal ribosomal protein uS14 family. Zinc-binding uS14 subfamily. Part of the 30S ribosomal subunit. Contacts proteins S3 and S10. Requires Zn(2+) as cofactor.

Functionally, binds 16S rRNA, required for the assembly of 30S particles and may also be responsible for determining the conformation of the 16S rRNA at the A site. This chain is Small ribosomal subunit protein uS14B, found in Streptococcus agalactiae serotype Ia (strain ATCC 27591 / A909 / CDC SS700).